A 469-amino-acid chain; its full sequence is Regulator of G-protein signaling 7 (469 aa).

A DEP domain is found at 37 to 112; that stretch reads EKNGIPIRTV…DDGTFYRFQT (76 aa). Ser-229 and Ser-241 each carry phosphoserine. Residues 236-255 are disordered; that stretch reads DIRSHSPTHTPTPETKPPTE. Thr-243 bears the Phosphothreonine mark. Residues 255–316 enclose the G protein gamma domain; it reads EDELHQQIKY…LSDDTTFWEL (62 aa). Residues 333–448 form the RGS domain; that stretch reads GMDEALKDPV…IRSSAYQELL (116 aa). Ser-434 carries the phosphoserine modification.

Interacts with GNB5, forming the RGS7-GNB5 complex. Interacts with GPR158; promotes the GTPase activator activity of the RGS7-GNB5 complex in absence of glycine, in contrast GTPase activator activity of the RGS7-GNB5 complex is inhibited in presence of glycine. Interacts with GPR179. Interacts with PKD1; this prevents rapid proteasomal degradation. Interacts with RGS7BP, leading to regulate the subcellular location of the heterodimer formed with GNB5. Interacts (phosphorylated form) with 14-3-3 protein YWHAQ. Interacts with SNAPIN. Interacts with GNAI1. Interacts with GNAO1, GNAI3 and GNAZ. Palmitoylated. In terms of processing, ubiquitinated, leading to rapid proteasomal degradation. Post-translationally, phosphorylation and subsequent interaction with 14-3-3 proteins inhibits GAP activity. In terms of tissue distribution, detected in brain (at protein level).

The protein resides in the cytoplasm. It is found in the cytosol. Its subcellular location is the cell membrane. The protein localises to the membrane. Its function is as follows. GTPase activator component of the RGS7-GNB5 complex that regulates G protein-coupled receptor signaling cascades. The RGS7-GNB5 complex acts as an inhibitor signal transduction by promoting the GTPase activity of G protein alpha subunits, such as GNAO1, thereby driving them into their inactive GDP-bound form. May play a role in synaptic vesicle exocytosis. Glycine-dependent regulation of the RGS7-GNB5 complex by GPR158 affects mood and cognition via its ability to regulate neuronal excitability in L2/L3 pyramidal neurons of the prefrontal cortex. Modulates the activity of potassium channels that are activated by GNAO1 in response to muscarinic acetylcholine receptor M2/CHRM2 signaling. This is Regulator of G-protein signaling 7 (Rgs7) from Mus musculus (Mouse).